The primary structure comprises 67 residues: SPbeta prophage-derived uncharacterized protein YopZ (67 aa).

The stretch at 1-40 (MTSEMQLQAQIDVIEKENKELRRRNEELGQTVECQNKQIV) forms a coiled coil. A helical membrane pass occupies residues 44–66 (WRLLFFASSWIVYGIVSAIKYLW).

It localises to the cell membrane. The chain is SPbeta prophage-derived uncharacterized protein YopZ (yopZ) from Bacillus subtilis (strain 168).